The chain runs to 633 residues: Phosphomethylpyrimidine synthase (633 aa).

Substrate-binding positions include N245, M274, Y303, H339, 359–361, 400–403, and E439; these read SRG and DGLR. H443 is a Zn(2+) binding site. Y466 lines the substrate pocket. H507 lines the Zn(2+) pocket. C587, C590, and C595 together coordinate [4Fe-4S] cluster.

This sequence belongs to the ThiC family. As to quaternary structure, homodimer. Requires [4Fe-4S] cluster as cofactor.

The enzyme catalyses 5-amino-1-(5-phospho-beta-D-ribosyl)imidazole + S-adenosyl-L-methionine = 4-amino-2-methyl-5-(phosphooxymethyl)pyrimidine + CO + 5'-deoxyadenosine + formate + L-methionine + 3 H(+). It participates in cofactor biosynthesis; thiamine diphosphate biosynthesis. Catalyzes the synthesis of the hydroxymethylpyrimidine phosphate (HMP-P) moiety of thiamine from aminoimidazole ribotide (AIR) in a radical S-adenosyl-L-methionine (SAM)-dependent reaction. In Neisseria meningitidis serogroup B (strain ATCC BAA-335 / MC58), this protein is Phosphomethylpyrimidine synthase.